Consider the following 348-residue polypeptide: Signal recognition particle receptor FtsY (348 aa).

GTP is bound by residues 143–150, 225–229, and 289–292; these read GVNGVGKT, DTSGR, and TKMD.

The protein belongs to the GTP-binding SRP family. FtsY subfamily. In terms of assembly, part of the signal recognition particle protein translocation system, which is composed of SRP and FtsY.

The protein resides in the cell membrane. It is found in the cytoplasm. The catalysed reaction is GTP + H2O = GDP + phosphate + H(+). In terms of biological role, involved in targeting and insertion of nascent membrane proteins into the cytoplasmic membrane. Acts as a receptor for the complex formed by the signal recognition particle (SRP) and the ribosome-nascent chain (RNC). This Mycoplasma pneumoniae (strain ATCC 29342 / M129 / Subtype 1) (Mycoplasmoides pneumoniae) protein is Signal recognition particle receptor FtsY.